The following is a 195-amino-acid chain: Cyclin-dependent kinase inhibitor 7 (195 aa).

Positions 1 to 11 (MSETKPKRDSE) are enriched in basic and acidic residues. Disordered stretches follow at residues 1–50 (MSET…SVSD), 61–80 (EEED…SSET), and 117–154 (SSEN…TQAE). Low complexity-rich tracts occupy residues 37–50 (SSSS…SVSD) and 68–80 (SSSI…SSET). Phosphothreonine; by KIN10 is present on T151.

It belongs to the CDI family. ICK/KRP subfamily. In terms of assembly, specifically interacts with CDKA-1, but not with CDKB1-1. Interacts with CYCD4-1. Binds to FBL17. Post-translationally, ubiquitinated by SCF(FBL17). Ubiquitination leads to its subsequent degradation, thus controlling cell cycle progression. Expressed in flowers, in developing pollen, and at lower levels in roots and leaves.

It localises to the nucleus. Its subcellular location is the nucleoplasm. Its function is as follows. Binds and inhibits CYCD2-1/CDKA-1 complex kinase activity. May target specifically CDKA-1. The chain is Cyclin-dependent kinase inhibitor 7 (KRP7) from Arabidopsis thaliana (Mouse-ear cress).